The sequence spans 437 residues: O-methyltransferase 3 (437 aa).

The tract at residues 1–21 (MNNKTSNGDITNDEPTVGSKR) is disordered. Positions 146–180 (SDNLYQDKDDLEKQEKEREKKMANLLSKNVDIKEL) form a coiled coil. Residues 408-437 (DPINNNNNNNNNNNNNNNNTTTTTSTTTTN) form a disordered region. Residues 411–437 (NNNNNNNNNNNNNNNNTTTTTSTTTTN) are compositionally biased toward low complexity.

The protein belongs to the methyltransferase superfamily. METL family.

Its function is as follows. Probable methyltransferase. The chain is O-methyltransferase 3 (omt3) from Dictyostelium discoideum (Social amoeba).